A 541-amino-acid chain; its full sequence is Nuclear receptor subfamily 5 group A member 2 (541 aa).

Residues 1-10 (MSSNSDTGDL) show a composition bias toward polar residues. The disordered stretch occupies residues 1–35 (MSSNSDTGDLQESLKHGLTPIGAGLPDRHGSPIPA). Positions 83–154 (EELCPVCGDK…KCLSVGMKLE (72 aa)) form a DNA-binding region, nuclear receptor. Residues C86, C89, C103, C106, C122, C128, C138, and C141 each coordinate Zn(2+). 2 NR C4-type zinc fingers span residues 86 to 106 (CPVC…CESC) and 122 to 146 (CIEN…FQKC). The interval 152–167 (KLEAVRADRMRGGRNK) is C-terminal extension (CTE). The short motif at 168 to 187 (FGPMYKRDRALKQQKKALIR) is the FTZ-F1 box element. Residue K270 forms a Glycyl lysine isopeptide (Lys-Gly) (interchain with G-Cter in SUMO1) linkage. The NR LBD domain maps to 300–539 (SIPHLILELL…NLLIEMLHAK (240 aa)). Residues 421-424 (GATL), Y516, and K520 each bind a phospholipid derivative. The segment at 528-539 (YNNLLIEMLHAK) is AF-2.

The protein belongs to the nuclear hormone receptor family. NR5 subfamily. As to quaternary structure, monomer; Binds DNA as a monomer. Interacts with nuclear receptor corepressors NR0B1 and NR0B2; repressing NR5A2 nuclear receptor activity. Interacts with nuclear receptor coactivators CTNNB1, PPARGC1A and NCOA2; interaction takes place following ligand-binding and promotes target gene activation. Interacts (when sumoylated) with GPS2; interaction with GPS2 onto hepatic acute phase protein promoters prevents N-Cor corepressor complex dissociation. Interacts with HNF1A. Interacts with GRIP1. Sumoylated by SUMO1 at Lys-270 during the hepatic acute phase response, leading to promote interaction with GPS2 and prevent N-Cor corepressor complex dissociation. As to expression, abundantly expressed in pancreas, less in liver, very low levels in heart and lung. Expressed in the Hep-G2 cell line. Isoform 1 and isoform 2 seem to be present in fetal and adult liver and Hep-G2 cells.

Its subcellular location is the nucleus. The protein localises to the chromosome. Activated by synthetic agonists RR-RJW100, SR-RJW100, endo sulfamide compound 6N and GSK8470. In terms of biological role, orphan nuclear receptor that binds DNA as a monomer to the 5'-TCAAGGCCA-3' sequence and controls expression of target genes: regulates key biological processes, such as early embryonic development, cholesterol and bile acid synthesis pathways, as well as liver and pancreas morphogenesis. Ligand-binding causes conformational change which causes recruitment of coactivators, promoting target gene activation. The specific ligand is unknown, but specific phospholipids, such as phosphatidylethanolamine, phosphatidylserine, dilauroyl phosphatidylcholine and diundecanoyl phosphatidylcholine can act as ligand in vitro. Acts as a pioneer transcription factor, which unwraps target DNA from histones and elicits local opening of closed chromatin. Plays a central role during preimplantation stages of embryonic development. Plays a minor role in zygotic genome activation (ZGA) by regulating a small set of two-cell stage genes. Plays a major role in morula development (2-16 cells embryos) by acting as a master regulator at the 8-cell stage, controlling expression of lineage-specifying transcription factors and genes involved in mitosis, telomere maintenance and DNA repair. Zygotic NR5A2 binds to both closed and open chromatin with other transcription factors, often at SINE B1/Alu repeats DNA elements, promoting chromatin accessibility at nearby regulatory regions. Also involved in the epiblast stage of development and embryonic stem cell pluripotency, by promoting expression of POU5F1/OCT4. Regulates other processes later in development, such as formation of connective tissue in lower jaw and middle ear, neural stem cell differentiation, ovarian follicle development and Sertoli cell differentiation. Involved in exocrine pancreas development and acinar cell differentiation. Acts as an essential transcriptional regulator of lipid metabolism. Key regulator of cholesterol 7-alpha-hydroxylase gene (CYP7A) expression in liver. Also acts as a negative regulator of inflammation in different organs, such as, liver and pancreas. Protects against intestinal inflammation via its ability to regulate glucocorticoid production. Plays an anti-inflammatory role during the hepatic acute phase response by acting as a corepressor: inhibits the hepatic acute phase response by preventing dissociation of the N-Cor corepressor complex. Acts as a regulator of immunity by promoting lymphocyte T-cell development, proliferation and effector functions. Also involved in resolution of endoplasmic reticulum stress in the liver. In constrast to isoform 1 and isoform 2, does not induce cholesterol 7-alpha-hydroxylase gene (CYP7A) promoter activity. Its function is as follows. (Microbial infection) Plays a crucial role for hepatitis B virus gene transcription and DNA replication. Mechanistically, synergistically cooperates with HNF1A to up-regulate the activity of one of the critical cis-elements in the hepatitis B virus genome enhancer II (ENII). The protein is Nuclear receptor subfamily 5 group A member 2 of Homo sapiens (Human).